Here is a 106-residue protein sequence, read N- to C-terminus: Large ribosomal subunit protein uL24 (106 aa).

This sequence belongs to the universal ribosomal protein uL24 family. As to quaternary structure, part of the 50S ribosomal subunit.

Functionally, one of two assembly initiator proteins, it binds directly to the 5'-end of the 23S rRNA, where it nucleates assembly of the 50S subunit. In terms of biological role, one of the proteins that surrounds the polypeptide exit tunnel on the outside of the subunit. The protein is Large ribosomal subunit protein uL24 of Paramagnetospirillum magneticum (strain ATCC 700264 / AMB-1) (Magnetospirillum magneticum).